The following is a 246-amino-acid chain: UL16-binding protein 6 (246 aa).

The signal sequence occupies residues 1 to 25 (MAAAAIPALLLCLPLLFLLFGWSRA). The tract at residues 29-117 (DPHSLCYDIT…IQLENYTPKE (89 aa)) is MHC class I alpha-1 like. Cysteines 50 and 66 form a disulfide. N-linked (GlcNAc...) asparagine glycans are attached at residues N68 and N82. The MHC class I alpha-2 like stretch occupies residues 118 to 210 (PLTLQARMSC…MDSTLEPSAG (93 aa)). The cysteines at positions 127 and 190 are disulfide-linked. G218 carries the GPI-anchor amidated glycine lipid modification. Positions 219–246 (TTQLRATATTLILCCLLIILPCFILPGI) are cleaved as a propeptide — removed in mature form.

It belongs to the MHC class I family. As to quaternary structure, interacts with KLRK1/NKG2D. In terms of assembly, (Microbial infection) In CMV-infected cells, interacts with the viral glycoprotein UL16; this interaction causes relocalization from the cell surface to the cytoplasm and prevents binding to and activation of KLRK1/NKG2D, providing CMV with an immune evasion mechanism. As to expression, widely expressed. Expressed in trachea. Constitutively expressed in peripheral blood mononuclear cells, including B-cells and natural killer cells, as well as CD4+ and CD8+ T-cells and monocytes. Tends to be up-regulated in various lymphoid malignancies, including chronic lymphocytic leukemia.

It is found in the cell membrane. The protein resides in the endoplasmic reticulum. Binds and activates the KLRK1/NKG2D receptor, mediating natural killer cell cytotoxicity. The sequence is that of UL16-binding protein 6 (RAET1L) from Homo sapiens (Human).